The primary structure comprises 404 residues: MQAEEQFSCGVIVVAAGRGERAGQSSEGPKQYRTVGDRPVITHTLDVFATWDGTGPVVVVIHPEDEELFASARKRMGHMLDLTVVHGGATRQLSVLAGLQAIAGAGVKHVMIHDAVRPFFDHALLDRCRAALRNGAGAVLPAVAVADTLKRAQAGGLVAETVPRTDLHAAQTPQCFRLEAILSAHRQAAASGQADFTDDASIAEWAGIPVHLVEGSPDNFKLTLRRDLSMADEKLTRMAIPDVRTGNGYDVHQLVEGDGVTLCGVFIPHDRKLSGHSDADVALHALTDALLATCGAGDIGDHFPPSDPRWKGAPSHIFLEHAARIVRERGGTITHADISLIAEAPKVGPHRQQMRESLSAMLAIAIDRCSVKATTNEKLGFVGRNEGIAAIATATVVYASGGDA.

Residues 1–243 (MQAEEQFSCG…KLTRMAIPDV (243 aa)) form a 2-C-methyl-D-erythritol 4-phosphate cytidylyltransferase region. Residues 244–404 (RTGNGYDVHQ…TVVYASGGDA (161 aa)) are 2-C-methyl-D-erythritol 2,4-cyclodiphosphate synthase. Asp250 and His252 together coordinate a divalent metal cation. Residues 250 to 252 (DVH) and 276 to 277 (HS) each bind 4-CDP-2-C-methyl-D-erythritol 2-phosphate. Residue His284 coordinates a divalent metal cation. Residues 298–300 (DIG), 374–377 (TTNE), Phe381, and Arg384 contribute to the 4-CDP-2-C-methyl-D-erythritol 2-phosphate site.

In the N-terminal section; belongs to the IspD/TarI cytidylyltransferase family. IspD subfamily. It in the C-terminal section; belongs to the IspF family. A divalent metal cation is required as a cofactor.

It carries out the reaction 2-C-methyl-D-erythritol 4-phosphate + CTP + H(+) = 4-CDP-2-C-methyl-D-erythritol + diphosphate. The enzyme catalyses 4-CDP-2-C-methyl-D-erythritol 2-phosphate = 2-C-methyl-D-erythritol 2,4-cyclic diphosphate + CMP. It participates in isoprenoid biosynthesis; isopentenyl diphosphate biosynthesis via DXP pathway; isopentenyl diphosphate from 1-deoxy-D-xylulose 5-phosphate: step 2/6. The protein operates within isoprenoid biosynthesis; isopentenyl diphosphate biosynthesis via DXP pathway; isopentenyl diphosphate from 1-deoxy-D-xylulose 5-phosphate: step 4/6. In terms of biological role, bifunctional enzyme that catalyzes the formation of 4-diphosphocytidyl-2-C-methyl-D-erythritol from CTP and 2-C-methyl-D-erythritol 4-phosphate (MEP) (IspD), and catalyzes the conversion of 4-diphosphocytidyl-2-C-methyl-D-erythritol 2-phosphate (CDP-ME2P) to 2-C-methyl-D-erythritol 2,4-cyclodiphosphate (ME-CPP) with a corresponding release of cytidine 5-monophosphate (CMP) (IspF). The protein is Bifunctional enzyme IspD/IspF of Sinorhizobium medicae (strain WSM419) (Ensifer medicae).